We begin with the raw amino-acid sequence, 272 residues long: Putative MgpC-like protein MPN_102 (272 aa).

It belongs to the MgpC family.

This is Putative MgpC-like protein MPN_102 from Mycoplasma pneumoniae (strain ATCC 29342 / M129 / Subtype 1) (Mycoplasmoides pneumoniae).